Here is a 479-residue protein sequence, read N- to C-terminus: UDP-glucose flavonoid 3-O-glucosyltransferase 6 (479 aa).

The active-site Proton acceptor is the H17. An an anthocyanidin-binding site is contributed by H17. The Charge relay role is filled by D121. UDP-alpha-D-glucose contacts are provided by T143, A354, Q356, H371, W374, N375, S376, and E379. Position 394 (A394) interacts with an anthocyanidin. Positions 395 and 396 each coordinate UDP-alpha-D-glucose. The interval 454 to 479 (MSRKALEEDGSSYSSLGRFLDQIQTS) is disordered.

It belongs to the UDP-glycosyltransferase family. In terms of tissue distribution, strongly expressed in achenes, with lower expression levels detected in receptacles.

It catalyses the reaction a flavonol + UDP-alpha-D-glucose = a flavonol 3-O-beta-D-glucoside + UDP + H(+). Functionally, broad spectrum multifunctional glucosyltransferase. Catalyzes the formation of flavonol 3-O-glucosides during fruit ripening. Accepted substrates include several flavonoids, hydroxycoumarins and beta-naphthols. Uses UDP-Glc as a sugar donor, but not UDP-Gal or UDP-GlcUA. May also be involved in detoxification of xenobiotics. This Fragaria ananassa (Strawberry) protein is UDP-glucose flavonoid 3-O-glucosyltransferase 6.